Reading from the N-terminus, the 378-residue chain is MAKMMMLQQHQPSFSLLTSSLSDFNGAKLHLQVQYKRKVHQPKGALYVSASSEKKILIMGGTRFIGLFLSRILVKEGHQVTLFTRGKSPIAKQLPGESDQDFADFSSKILHLKGDRKDYDFVKSSLSAEGFDVVYDINGREAEEVEPILEALPKLEQYIYCSSAGVYLKSDILPHCEEDAVDPKSRHKGKLETESLLQSKGVNWTSIRPVYIYGPLNYNPVEEWFFHRLKAGRPIPVPNSGIQISQLGHVKDLATAFLNVLGNEKASREIFNISGEKYVTFDGLAKACAKAGGFPEPEIVHYNPKEFDFGKKKAFPFRDQHFFASVEKAKHVLGWKPEFDLVEGLTDSYNLDFGRGTFRKEADFTTDDMILSKKLVLQ.

The transit peptide at 1-50 (MAKMMMLQQHQPSFSLLTSSLSDFNGAKLHLQVQYKRKVHQPKGALYVSA) directs the protein to the chloroplast. At Ser240 the chain carries Phosphoserine.

It belongs to the NAD(P)-dependent epimerase/dehydratase family. As to quaternary structure, component of a complex made of CSP41A, CSP41B, ribosomes, and the plastid-encoded RNA polymerase. Interacts with CSP41A. Binds DNA when in complex with PRIN2. In terms of tissue distribution, highly expressed in seedlings, particularly in photosynthetically active organs. Mostly expressed in young and mature leaves, and, to a lower extent, in flowers. Low expression in etiolated seedlings compared to green seedlings.

The protein localises to the plastid. Its subcellular location is the chloroplast. It is found in the plastoglobule. It localises to the cytoplasm. Its function is as follows. Binds and cleaves RNA, particularly in stem-loops. Associates with pre-ribosomal particles in chloroplasts, and participates in chloroplast ribosomal RNA metabolism, probably during the final steps of 23S rRNA maturation. May enhance transcription by the plastid-encoded polymerase and translation in plastid via the stabilization of ribosome assembly intermediates. Required for chloroplast integrity. Involved in the regulation of the circadian system. Involved in the regulation of heteroglycans and monosaccharide mobilization. Required for full expression of genes transcribed by the plastid-encoded RNA polymerase (PEP). Essential for embryo development. The protein is Chloroplast stem-loop binding protein of 41 kDa b, chloroplastic (CSP41B) of Arabidopsis thaliana (Mouse-ear cress).